The primary structure comprises 425 residues: Glutamyl-tRNA reductase (425 aa).

Substrate is bound by residues 49-52 (TCNR), serine 107, 112-114 (EPQ), and glutamine 118. Cysteine 50 acts as the Nucleophile in catalysis. 187-192 (GAGETI) contacts NADP(+).

This sequence belongs to the glutamyl-tRNA reductase family. In terms of assembly, homodimer.

The catalysed reaction is (S)-4-amino-5-oxopentanoate + tRNA(Glu) + NADP(+) = L-glutamyl-tRNA(Glu) + NADPH + H(+). Its pathway is porphyrin-containing compound metabolism; protoporphyrin-IX biosynthesis; 5-aminolevulinate from L-glutamyl-tRNA(Glu): step 1/2. In terms of biological role, catalyzes the NADPH-dependent reduction of glutamyl-tRNA(Glu) to glutamate 1-semialdehyde (GSA). The sequence is that of Glutamyl-tRNA reductase from Pseudomonas entomophila (strain L48).